The chain runs to 139 residues: FAD synthase (139 aa).

Residues 8–9, 13–16, D92, and Y119 each bind ATP; these read VF and HPGH.

It belongs to the archaeal FAD synthase family. As to quaternary structure, homodimer. A divalent metal cation serves as cofactor.

It catalyses the reaction FMN + ATP + H(+) = FAD + diphosphate. It participates in cofactor biosynthesis; FAD biosynthesis; FAD from FMN: step 1/1. Its function is as follows. Catalyzes the transfer of the AMP portion of ATP to flavin mononucleotide (FMN) to produce flavin adenine dinucleotide (FAD) coenzyme. The polypeptide is FAD synthase (Picrophilus torridus (strain ATCC 700027 / DSM 9790 / JCM 10055 / NBRC 100828 / KAW 2/3)).